The chain runs to 423 residues: MLDLKFVRSSPDIVRHALINRNMSTELIDSLLEYDIAWRKCLTEGDELKHKRNVVTREIAKLKKENKDTLSKIEEMQGINSRIKEIDDIIRDYKSKIHEIMLRIPNIPSSTTPVGKDENDNPVVRIVGEPRKFTFTPKPHWEIGEALDILDFEKGAKISGQGFTVYKGMGAKLERALVNFMLEVHARQGYLEVFPPVLINEKAMTGTGQLPKFKDDMYLCTDGYYLAPTAEVPVTNLFMDDYIEKLPVFLTAYTACFRREAGKHGQDTRGIIRQHQFNKVELVKFVKPETSYDELEKLTNDAEEILKLLKLPYRVVNLCTGDIGFSAAKTYDLEVWVPTQEKYREISSCSNFENFQARRANIRFRTPDGPQFVHTLNGSGLAVGRTVVAILENYQREDGSVEIPEVLRPYLGGAKEISNEVKT.

229 to 231 contributes to the L-serine binding site; it reads TAE. An ATP-binding site is contributed by 258-260; sequence RRE. E281 is an L-serine binding site. 345 to 348 is an ATP binding site; the sequence is EISS. S379 lines the L-serine pocket.

It belongs to the class-II aminoacyl-tRNA synthetase family. Type-1 seryl-tRNA synthetase subfamily. In terms of assembly, homodimer. The tRNA molecule binds across the dimer.

The protein localises to the cytoplasm. It carries out the reaction tRNA(Ser) + L-serine + ATP = L-seryl-tRNA(Ser) + AMP + diphosphate + H(+). It catalyses the reaction tRNA(Sec) + L-serine + ATP = L-seryl-tRNA(Sec) + AMP + diphosphate + H(+). It participates in aminoacyl-tRNA biosynthesis; selenocysteinyl-tRNA(Sec) biosynthesis; L-seryl-tRNA(Sec) from L-serine and tRNA(Sec): step 1/1. Its function is as follows. Catalyzes the attachment of serine to tRNA(Ser). Is also able to aminoacylate tRNA(Sec) with serine, to form the misacylated tRNA L-seryl-tRNA(Sec), which will be further converted into selenocysteinyl-tRNA(Sec). This chain is Serine--tRNA ligase (serS1), found in Methanosarcina barkeri (strain Fusaro / DSM 804).